A 212-amino-acid polypeptide reads, in one-letter code: Probable nicotinate-nucleotide adenylyltransferase (212 aa).

It belongs to the NadD family.

The enzyme catalyses nicotinate beta-D-ribonucleotide + ATP + H(+) = deamido-NAD(+) + diphosphate. Its pathway is cofactor biosynthesis; NAD(+) biosynthesis; deamido-NAD(+) from nicotinate D-ribonucleotide: step 1/1. In terms of biological role, catalyzes the reversible adenylation of nicotinate mononucleotide (NaMN) to nicotinic acid adenine dinucleotide (NaAD). This chain is Probable nicotinate-nucleotide adenylyltransferase, found in Shewanella sp. (strain MR-4).